Here is a 326-residue protein sequence, read N- to C-terminus: Biotin synthase (326 aa).

The Radical SAM core domain maps to 51–275 (NAVQRSTLLS…MMPTSFVRLS (225 aa)). Residues Cys-66, Cys-70, and Cys-73 each coordinate [4Fe-4S] cluster. The [2Fe-2S] cluster site is built by Cys-110, Cys-141, Cys-201, and Arg-273.

This sequence belongs to the radical SAM superfamily. Biotin synthase family. In terms of assembly, homodimer. The cofactor is [4Fe-4S] cluster. [2Fe-2S] cluster serves as cofactor.

The catalysed reaction is (4R,5S)-dethiobiotin + (sulfur carrier)-SH + 2 reduced [2Fe-2S]-[ferredoxin] + 2 S-adenosyl-L-methionine = (sulfur carrier)-H + biotin + 2 5'-deoxyadenosine + 2 L-methionine + 2 oxidized [2Fe-2S]-[ferredoxin]. The protein operates within cofactor biosynthesis; biotin biosynthesis; biotin from 7,8-diaminononanoate: step 2/2. Catalyzes the conversion of dethiobiotin (DTB) to biotin by the insertion of a sulfur atom into dethiobiotin via a radical-based mechanism. This chain is Biotin synthase, found in Aromatoleum aromaticum (strain DSM 19018 / LMG 30748 / EbN1) (Azoarcus sp. (strain EbN1)).